The primary structure comprises 118 residues: Large ribosomal subunit protein bL19 (118 aa).

It belongs to the bacterial ribosomal protein bL19 family.

In terms of biological role, this protein is located at the 30S-50S ribosomal subunit interface and may play a role in the structure and function of the aminoacyl-tRNA binding site. This is Large ribosomal subunit protein bL19 from Ligilactobacillus salivarius (strain UCC118) (Lactobacillus salivarius).